We begin with the raw amino-acid sequence, 279 residues long: Phosphatidylglycerol--prolipoprotein diacylglyceryl transferase (279 aa).

3 helical membrane passes run 18 to 38, 55 to 75, and 89 to 109; these read LSVRWYGIIIAVGILLGYFVA, IIFYSALFGFIAARIYFVIFQ, and IWHGGIAIHGGLIGGFIAGVI. R137 is a binding site for a 1,2-diacyl-sn-glycero-3-phospho-(1'-sn-glycerol). Helical transmembrane passes span 203 to 223 and 235 to 255; these read LGETFFLYLTWYSIGRFFIEG and IRVAQLVSILLILISISLIVY.

This sequence belongs to the Lgt family.

It localises to the cell membrane. The catalysed reaction is L-cysteinyl-[prolipoprotein] + a 1,2-diacyl-sn-glycero-3-phospho-(1'-sn-glycerol) = an S-1,2-diacyl-sn-glyceryl-L-cysteinyl-[prolipoprotein] + sn-glycerol 1-phosphate + H(+). The protein operates within protein modification; lipoprotein biosynthesis (diacylglyceryl transfer). Functionally, catalyzes the transfer of the diacylglyceryl group from phosphatidylglycerol to the sulfhydryl group of the N-terminal cysteine of a prolipoprotein, the first step in the formation of mature lipoproteins. The sequence is that of Phosphatidylglycerol--prolipoprotein diacylglyceryl transferase from Staphylococcus aureus (strain bovine RF122 / ET3-1).